The following is a 608-amino-acid chain: Zinc metalloproteinase-disintegrin-like agkihagin (608 aa).

Positions 1–20 (MIQVLLVTICLAAFPYQGSS) are cleaved as a signal peptide. A propeptide spanning residues 21-189 (IILESGNVND…KKASQSNLTP (169 aa)) is cleaved from the precursor. The Peptidase M12B domain maps to 199 to 395 (KFVKLFLVAD…NMPQCILKKP (197 aa)). Intrachain disulfides connect cysteine 310–cysteine 390, cysteine 350–cysteine 374, and cysteine 352–cysteine 357. Histidine 335 contributes to the Zn(2+) binding site. Glutamate 336 is an active-site residue. Residues histidine 339 and histidine 345 each coordinate Zn(2+). The Disintegrin domain maps to 403-488 (PPVCGNYFVE…ADCTDRFQKN (86 aa)). Residues valine 405, asparagine 408, phenylalanine 410, glutamate 412, glutamate 415, and aspartate 418 each coordinate Ca(2+). Cystine bridges form between cysteine 406–cysteine 435, cysteine 417–cysteine 430, cysteine 419–cysteine 425, cysteine 429–cysteine 452, cysteine 443–cysteine 449, cysteine 448–cysteine 474, cysteine 461–cysteine 481, cysteine 468–cysteine 499, cysteine 492–cysteine 504, cysteine 511–cysteine 561, cysteine 526–cysteine 570, cysteine 539–cysteine 549, cysteine 556–cysteine 596, and cysteine 590–cysteine 601. A D/ECD-tripeptide motif is present at residues 467-469 (ECD). Ca(2+) contacts are provided by aspartate 469, methionine 470, aspartate 472, aspartate 483, and arginine 484. Asparagine 501 is a glycosylation site (N-linked (GlcNAc...) asparagine).

The protein belongs to the venom metalloproteinase (M12B) family. P-III subfamily. P-IIIc sub-subfamily. In terms of assembly, homodimer; disulfide-linked. Zn(2+) serves as cofactor. In terms of tissue distribution, expressed by the venom gland.

Its subcellular location is the secreted. Inhibited by EDTA and EGTA. Not inhibited by PMSF, antipain, pepstatin, and iodoacetamide. In terms of biological role, strongly inhibits the collagen-induced human platelet aggregation. Hydrolyzes the Aalpha-chain of fibrinogen (FGA), without cleavage of Bbeta- and gamma-chains. Induces apoptosis and strongly inhibits proliferation of endothelial cells as well as adhesion of the cells to extracellular matrix proteins. In Deinagkistrodon acutus (Hundred-pace snake), this protein is Zinc metalloproteinase-disintegrin-like agkihagin.